The primary structure comprises 338 residues: D-erythrose-4-phosphate dehydrogenase (338 aa).

11–12 lines the NAD(+) pocket; that stretch reads RI. Substrate-binding positions include 153-155, Arg199, 212-213, and Arg235; these read SCT and TK. Catalysis depends on Cys154, which acts as the Nucleophile. NAD(+) is bound at residue Asn317.

It belongs to the glyceraldehyde-3-phosphate dehydrogenase family. Epd subfamily. As to quaternary structure, homotetramer.

It is found in the cytoplasm. It catalyses the reaction D-erythrose 4-phosphate + NAD(+) + H2O = 4-phospho-D-erythronate + NADH + 2 H(+). Its pathway is cofactor biosynthesis; pyridoxine 5'-phosphate biosynthesis; pyridoxine 5'-phosphate from D-erythrose 4-phosphate: step 1/5. Catalyzes the NAD-dependent conversion of D-erythrose 4-phosphate to 4-phosphoerythronate. The sequence is that of D-erythrose-4-phosphate dehydrogenase from Shewanella putrefaciens (strain CN-32 / ATCC BAA-453).